The primary structure comprises 45 residues: Large ribosomal subunit protein bL34 (45 aa).

Over residues 1–10 the composition is skewed to polar residues; it reads MTQRTLGGTN. The tract at residues 1-45 is disordered; that stretch reads MTQRTLGGTNRKQKRTSGFRARMRTHNGRKVIQARRSKGRHRLAV. Basic residues predominate over residues 11–45; it reads RKQKRTSGFRARMRTHNGRKVIQARRSKGRHRLAV.

This sequence belongs to the bacterial ribosomal protein bL34 family.

This chain is Large ribosomal subunit protein bL34 (rpmH), found in Synechocystis sp. (strain ATCC 27184 / PCC 6803 / Kazusa).